We begin with the raw amino-acid sequence, 228 residues long: 7-cyano-7-deazaguanine synthase (228 aa).

L8–L18 contacts ATP. Zn(2+) contacts are provided by C188, C198, C201, and C204.

The protein belongs to the QueC family. The cofactor is Zn(2+).

The enzyme catalyses 7-carboxy-7-deazaguanine + NH4(+) + ATP = 7-cyano-7-deazaguanine + ADP + phosphate + H2O + H(+). The protein operates within purine metabolism; 7-cyano-7-deazaguanine biosynthesis. Its function is as follows. Catalyzes the ATP-dependent conversion of 7-carboxy-7-deazaguanine (CDG) to 7-cyano-7-deazaguanine (preQ(0)). The protein is 7-cyano-7-deazaguanine synthase of Legionella pneumophila (strain Corby).